Reading from the N-terminus, the 1058-residue chain is Ubiquitin-like modifier-activating enzyme 1 (1058 aa).

Positions 1 to 47 are disordered; that stretch reads MSSSPLSKKRRVSGPDPKPGSNCSPAQSVLPQVPSAPTNGMAKNGSE. Ser-2 carries the N-acetylserine modification. A phosphoserine mark is found at Ser-4, Ser-13, Ser-21, Ser-24, and Ser-46. A compositionally biased stretch (polar residues) spans 21–38; sequence SNCSPAQSVLPQVPSAPT. Tyr-55 is subject to Phosphotyrosine. 2 consecutive repeat copies span residues 63–199 and 459–611. The tract at residues 63–611 is 2 approximate repeats; it reads GHEAMKRLQT…GTKGNVQVVI (549 aa). ATP is bound by residues Ala-478, Asp-504, Arg-515, Lys-528, and 576–577; that span reads DN. An N6-succinyllysine modification is found at Lys-528. Cys-632 (glycyl thioester intermediate) is an active-site residue. An N6-acetyllysine modification is found at Lys-671. Phosphothreonine is present on Thr-800. Ser-810, Ser-816, Ser-820, and Ser-835 each carry phosphoserine. Lys-980 carries the N6-acetyllysine modification.

The protein belongs to the ubiquitin-activating E1 family. In terms of assembly, monomer. As to expression, ubiquitous.

It localises to the cytoplasm. The protein resides in the mitochondrion. It is found in the nucleus. The catalysed reaction is ATP + ubiquitin + [E1 ubiquitin-activating enzyme]-L-cysteine = AMP + diphosphate + S-ubiquitinyl-[E1 ubiquitin-activating enzyme]-L-cysteine.. Its pathway is protein modification; protein ubiquitination. Functionally, catalyzes the first step in ubiquitin conjugation to mark cellular proteins for degradation through the ubiquitin-proteasome system. Activates ubiquitin by first adenylating its C-terminal glycine residue with ATP, and thereafter linking this residue to the side chain of a cysteine residue in E1, yielding a ubiquitin-E1 thioester and free AMP. Essential for the formation of radiation-induced foci, timely DNA repair and for response to replication stress. Promotes the recruitment of TP53BP1 and BRCA1 at DNA damage sites. This is Ubiquitin-like modifier-activating enzyme 1 (UBA1) from Oryctolagus cuniculus (Rabbit).